The following is a 176-amino-acid chain: MEQATLGGGCFWCLEAVYQMVEGIESVVSGYAAGQTKNPDYRSVCSGTTGHAETVQITFDSKVISYFEILEIFWISHDPTTLNRQGNDVGTQYRSIILYHSPEQKKQAEQSIQKAGEHFSDPIVTQVEILKEFYPAEDYHQNYFRTNPKQAYCHYVIKPKIDKYLKTGFKVKKEGS.

Residue Cys-10 is part of the active site.

This sequence belongs to the MsrA Met sulfoxide reductase family.

The catalysed reaction is L-methionyl-[protein] + [thioredoxin]-disulfide + H2O = L-methionyl-(S)-S-oxide-[protein] + [thioredoxin]-dithiol. It catalyses the reaction [thioredoxin]-disulfide + L-methionine + H2O = L-methionine (S)-S-oxide + [thioredoxin]-dithiol. Has an important function as a repair enzyme for proteins that have been inactivated by oxidation. Catalyzes the reversible oxidation-reduction of methionine sulfoxide in proteins to methionine. This Leptospira borgpetersenii serovar Hardjo-bovis (strain JB197) protein is Peptide methionine sulfoxide reductase MsrA.